Here is a 141-residue protein sequence, read N- to C-terminus: Large ribosomal subunit protein uL11 (141 aa).

The protein belongs to the universal ribosomal protein uL11 family. Part of the ribosomal stalk of the 50S ribosomal subunit. Interacts with L10 and the large rRNA to form the base of the stalk. L10 forms an elongated spine to which L12 dimers bind in a sequential fashion forming a multimeric L10(L12)X complex. Post-translationally, one or more lysine residues are methylated.

In terms of biological role, forms part of the ribosomal stalk which helps the ribosome interact with GTP-bound translation factors. In Tropheryma whipplei (strain TW08/27) (Whipple's bacillus), this protein is Large ribosomal subunit protein uL11.